A 69-amino-acid polypeptide reads, in one-letter code: Beta-defensin 1 (69 aa).

The N-terminal stretch at 1 to 21 (MKTHYFLLVMLFFLFSQMELG) is a signal peptide. A propeptide spanning residues 22 to 32 (AGILTSLGRRT) is cleaved from the precursor. 3 disulfide bridges follow: Cys-37/Cys-66, Cys-44/Cys-59, and Cys-49/Cys-67.

This sequence belongs to the beta-defensin family. In terms of assembly, monomer. Homodimer. As to expression, highly expressed in kidney.

The protein localises to the secreted. The protein resides in the membrane. Functionally, has bactericidal activity. May act as a ligand for C-C chemokine receptor CCR6. Positively regulates the sperm motility and bactericidal activity in a CCR6-dependent manner. Binds to CCR6 and triggers Ca2+ mobilization in the sperm which is important for its motility. This Rattus norvegicus (Rat) protein is Beta-defensin 1 (Defb1).